The chain runs to 273 residues: 2,3,4,5-tetrahydropyridine-2,6-dicarboxylate N-succinyltransferase (273 aa).

Substrate-binding residues include R104 and D141.

The protein belongs to the transferase hexapeptide repeat family. As to quaternary structure, homotrimer.

It localises to the cytoplasm. The catalysed reaction is (S)-2,3,4,5-tetrahydrodipicolinate + succinyl-CoA + H2O = (S)-2-succinylamino-6-oxoheptanedioate + CoA. The protein operates within amino-acid biosynthesis; L-lysine biosynthesis via DAP pathway; LL-2,6-diaminopimelate from (S)-tetrahydrodipicolinate (succinylase route): step 1/3. This is 2,3,4,5-tetrahydropyridine-2,6-dicarboxylate N-succinyltransferase from Acinetobacter baylyi (strain ATCC 33305 / BD413 / ADP1).